The chain runs to 95 residues: Small ribosomal subunit protein bS20 (95 aa).

2 disordered regions span residues 1–26 (MALR…RSRK) and 76–95 (KSRL…AQPA). Residues 80 to 95 (AKALNKAKAAQAAQPA) show a composition bias toward low complexity.

It belongs to the bacterial ribosomal protein bS20 family.

Its function is as follows. Binds directly to 16S ribosomal RNA. This is Small ribosomal subunit protein bS20 from Deinococcus geothermalis (strain DSM 11300 / CIP 105573 / AG-3a).